A 387-amino-acid chain; its full sequence is Alpha-maltose-1-phosphate synthase (387 aa).

It belongs to the glycosyltransferase group 1 family.

It carries out the reaction ADP-alpha-D-glucose + alpha-D-glucose 1-phosphate = alpha-maltose 1-phosphate + ADP + H(+). It participates in capsule biogenesis; capsule polysaccharide biosynthesis. The protein operates within glycan biosynthesis; glycogen biosynthesis. Involved in the biosynthesis of the maltose-1-phosphate (M1P) building block required for alpha-glucan production by the key enzyme GlgE. Catalyzes the formation of an alpha-1,4 linkage between glucose from ADP-glucose and glucose 1-phosphate (G1P) to yield maltose-1-phosphate (M1P). This chain is Alpha-maltose-1-phosphate synthase, found in Mycobacterium tuberculosis (strain CDC 1551 / Oshkosh).